A 404-amino-acid chain; its full sequence is Propionate kinase (404 aa).

Belongs to the acetokinase family. PduW subfamily.

Its subcellular location is the cytoplasm. The catalysed reaction is propanoate + ATP = propanoyl phosphate + ADP. Its pathway is polyol metabolism; 1,2-propanediol degradation. Functionally, works with phosphate acetyltransferase (pta) to capture exogenous propionate and regenerate propionyl-CoA during degradation of 1,2-propanediol (1,2-PD). The sequence is that of Propionate kinase from Klebsiella pneumoniae subsp. pneumoniae (strain ATCC 700721 / MGH 78578).